A 275-amino-acid polypeptide reads, in one-letter code: Shikimate dehydrogenase (NADP(+)) (275 aa).

Residues 15–17 (SKS) and Thr62 contribute to the shikimate site. The Proton acceptor role is filled by Lys66. Glu78 provides a ligand contact to NADP(+). Residues Asn87 and Asp102 each coordinate shikimate. NADP(+) contacts are provided by residues 128–132 (GAGGA), 151–156 (NRTAEK), and Leu218. Tyr220 serves as a coordination point for shikimate. An NADP(+)-binding site is contributed by Gly241.

The protein belongs to the shikimate dehydrogenase family. In terms of assembly, homodimer.

The enzyme catalyses shikimate + NADP(+) = 3-dehydroshikimate + NADPH + H(+). Its pathway is metabolic intermediate biosynthesis; chorismate biosynthesis; chorismate from D-erythrose 4-phosphate and phosphoenolpyruvate: step 4/7. Involved in the biosynthesis of the chorismate, which leads to the biosynthesis of aromatic amino acids. Catalyzes the reversible NADPH linked reduction of 3-dehydroshikimate (DHSA) to yield shikimate (SA). This is Shikimate dehydrogenase (NADP(+)) from Shouchella clausii (strain KSM-K16) (Alkalihalobacillus clausii).